A 156-amino-acid polypeptide reads, in one-letter code: Small ribosomal subunit protein uS7 (156 aa).

The protein belongs to the universal ribosomal protein uS7 family. Part of the 30S ribosomal subunit. Contacts proteins S9 and S11.

Its function is as follows. One of the primary rRNA binding proteins, it binds directly to 16S rRNA where it nucleates assembly of the head domain of the 30S subunit. Is located at the subunit interface close to the decoding center, probably blocks exit of the E-site tRNA. This Syntrophus aciditrophicus (strain SB) protein is Small ribosomal subunit protein uS7.